The chain runs to 274 residues: UPF0173 metal-dependent hydrolase Adeh_1068 (274 aa).

It belongs to the UPF0173 family.

In Anaeromyxobacter dehalogenans (strain 2CP-C), this protein is UPF0173 metal-dependent hydrolase Adeh_1068.